The chain runs to 484 residues: tRNA-2-methylthio-N(6)-dimethylallyladenosine synthase (484 aa).

The MTTase N-terminal domain maps to 36–153 (GKLYIKTHGC…LPELIRARRE (118 aa)). Positions 45, 82, 116, 190, 194, and 197 each coordinate [4Fe-4S] cluster. The 240-residue stretch at 176-415 (RAEGPSAFVS…HINAHAASIS (240 aa)) folds into the Radical SAM core domain. The TRAM domain occupies 416 to 479 (QSMVGSVQRV…SNSLRGRIQL (64 aa)). The interval 428–450 (EGPSRRDPNELTGKSENMRPVNF) is disordered.

It belongs to the methylthiotransferase family. MiaB subfamily. As to quaternary structure, monomer. It depends on [4Fe-4S] cluster as a cofactor.

Its subcellular location is the cytoplasm. It carries out the reaction N(6)-dimethylallyladenosine(37) in tRNA + (sulfur carrier)-SH + AH2 + 2 S-adenosyl-L-methionine = 2-methylsulfanyl-N(6)-dimethylallyladenosine(37) in tRNA + (sulfur carrier)-H + 5'-deoxyadenosine + L-methionine + A + S-adenosyl-L-homocysteine + 2 H(+). Functionally, catalyzes the methylthiolation of N6-(dimethylallyl)adenosine (i(6)A), leading to the formation of 2-methylthio-N6-(dimethylallyl)adenosine (ms(2)i(6)A) at position 37 in tRNAs that read codons beginning with uridine. This Xanthomonas euvesicatoria pv. vesicatoria (strain 85-10) (Xanthomonas campestris pv. vesicatoria) protein is tRNA-2-methylthio-N(6)-dimethylallyladenosine synthase.